Reading from the N-terminus, the 953-residue chain is MTDATPDYKDTVNLPQTTFEMRANAATREPQLQAFWAQHKIYETLQQTNPGEVFILHDGPPYANGALHIGHALNKILKDIINKYQLLRGRKVHYRPGWDCHGLPIELKVLQNLKPEQRAQLTPLTLRQQAKEFALKTVAEQKQSFQRYGVWGDWAHPYLTLTPDYEAAQIGVFGEMVLRGYIYRGLKPVHWSPSSKTALAEAELEYPEGHTSRSLYAAFEVIELPQGLAKAWYNALGKLGVAIWTTTPWTIPANLAVSVNPDLTYALVEVQPSERYKHLIVAKDLVERLSDTLGRTLKVVATAKGADLEHSRYRHPLFEREGKILIGGDYVTTESGTGLVHTAPGHGLEDYGVGQRYGLPILSPVDENGCFTAEAGPFAGLNVLQEGNAAVIAALQECGALLKEEPYVHKYPYDWRTKKPTIFRATEQWFASVEGFRDAALRAIAEVKWIPAQGENRITAMVAERSDWCISRQRSWGVPIPVFYDKETGEPLLTAETIAHVQAIIRDRGSDAWWELSVAELLPESLRDQADRYEKGTDTMDVWFDSGSSWAAVLGDQQADLYLEGSDQHRGWFQSSLLTRVAVKGQAPYKAVLTHGFVLDEQGRKMSKSLGNVTDPREVIEGGKNQKQDPPYGADVLRLWVSSVDYANDVPIGKNILRQLADVYRKIRNTARFLLGNLHDFEPEQDMIPYAQLPALDRYMLHRLHEVFSEVTAAFDSFQFYRFFQTIQNLCVVDLSNFYLDIAKDRLYISAATGDRRRSCQTVLAIALQNLARAIAPVLPHLAEDIWQHLPFKTPYLSVFQSGWVQLSAQWQDNALAAEWQRLRQLRLEVNKVLEKARAEKLIGSSLEAKVWLYVADSEWRDRLAQMNPRDALSGNGVDELRYLFLVSQVELMPQPQAVDVPYVLEAEGLWIGVGHAQGEKCVRCWNYSESVGQSALHPQLCDRCQAALQGEF.

Residues 61 to 71 (PYANGALHIGH) carry the 'HIGH' region motif. Position 564 (E564) interacts with L-isoleucyl-5'-AMP. Residues 605–609 (KMSKS) carry the 'KMSKS' region motif. Residue K608 coordinates ATP. Residues C922, C925, C942, and C945 each contribute to the Zn(2+) site.

The protein belongs to the class-I aminoacyl-tRNA synthetase family. IleS type 1 subfamily. Monomer. It depends on Zn(2+) as a cofactor.

It localises to the cytoplasm. It carries out the reaction tRNA(Ile) + L-isoleucine + ATP = L-isoleucyl-tRNA(Ile) + AMP + diphosphate. Catalyzes the attachment of isoleucine to tRNA(Ile). As IleRS can inadvertently accommodate and process structurally similar amino acids such as valine, to avoid such errors it has two additional distinct tRNA(Ile)-dependent editing activities. One activity is designated as 'pretransfer' editing and involves the hydrolysis of activated Val-AMP. The other activity is designated 'posttransfer' editing and involves deacylation of mischarged Val-tRNA(Ile). The sequence is that of Isoleucine--tRNA ligase from Thermosynechococcus vestitus (strain NIES-2133 / IAM M-273 / BP-1).